The chain runs to 549 residues: Chaperonin GroEL (549 aa).

ATP is bound by residues 30–33 (TLGP), Lys-51, 87–91 (DGTTT), Gly-415, 479–481 (NAA), and Asp-495.

It belongs to the chaperonin (HSP60) family. As to quaternary structure, forms a cylinder of 14 subunits composed of two heptameric rings stacked back-to-back. Interacts with the co-chaperonin GroES.

The protein localises to the cytoplasm. The enzyme catalyses ATP + H2O + a folded polypeptide = ADP + phosphate + an unfolded polypeptide.. Its function is as follows. Together with its co-chaperonin GroES, plays an essential role in assisting protein folding. The GroEL-GroES system forms a nano-cage that allows encapsulation of the non-native substrate proteins and provides a physical environment optimized to promote and accelerate protein folding. This Leptothrix cholodnii (strain ATCC 51168 / LMG 8142 / SP-6) (Leptothrix discophora (strain SP-6)) protein is Chaperonin GroEL.